The sequence spans 213 residues: uncharacterized protein (213 aa).

The chain crosses the membrane as a helical span at residues 22–42 (WFGLSMVSIAVIFGPLTGAHV). An NPA 1 motif is present at residues 43-45 (NPA). 3 helical membrane-spanning segments follow: residues 63 to 83 (VYII…WLLF), 112 to 132 (NLLS…TLNH), and 138 to 158 (GVAM…FGGL). The NPA 2 signature appears at 164-166 (NPA). A helical transmembrane segment spans residues 188 to 208 (FDYAWVPVLRPVIGAILAAWL).

The protein belongs to the MIP/aquaporin (TC 1.A.8) family.

It is found in the cell membrane. This is an uncharacterized protein from Haemophilus influenzae (strain ATCC 51907 / DSM 11121 / KW20 / Rd).